Reading from the N-terminus, the 282-residue chain is Ribosome-inactivating protein bryodin II (282 aa).

Positions 1–21 (MRSIGFYSVLALYVGAHVTED) are cleaved as a signal peptide. Asn-25 carries N-linked (GlcNAc...) asparagine glycosylation. Residue Glu-183 is part of the active site.

The protein belongs to the ribosome-inactivating protein family. Type 1 RIP subfamily.

The catalysed reaction is Endohydrolysis of the N-glycosidic bond at one specific adenosine on the 28S rRNA.. Functionally, ribosome-inactivating protein of type 1, inhibits protein synthesis in animal cells. This is Ribosome-inactivating protein bryodin II from Bryonia dioica (Red bryony).